A 677-amino-acid polypeptide reads, in one-letter code: UvrABC system protein B (677 aa).

The region spanning 25–412 is the Helicase ATP-binding domain; it reads QGVNGGERYQ…GGEVAQQVIR (388 aa). 38–45 contributes to the ATP binding site; the sequence is GATGTGKT. A Beta-hairpin motif is present at residues 91–114; it reads YYDYYQPEAYVPVSDTYIAKTASI. Residues 429 to 591 form the Helicase C-terminal domain; sequence QVDDLLGEIR…IVPTAAGKKA (163 aa). The 36-residue stretch at 639-674 folds into the UVR domain; sequence PELIDQLEGKMKEAAKKLDFEDAANLRDRIKQLRQK.

This sequence belongs to the UvrB family. Forms a heterotetramer with UvrA during the search for lesions. Interacts with UvrC in an incision complex.

The protein localises to the cytoplasm. Functionally, the UvrABC repair system catalyzes the recognition and processing of DNA lesions. A damage recognition complex composed of 2 UvrA and 2 UvrB subunits scans DNA for abnormalities. Upon binding of the UvrA(2)B(2) complex to a putative damaged site, the DNA wraps around one UvrB monomer. DNA wrap is dependent on ATP binding by UvrB and probably causes local melting of the DNA helix, facilitating insertion of UvrB beta-hairpin between the DNA strands. Then UvrB probes one DNA strand for the presence of a lesion. If a lesion is found the UvrA subunits dissociate and the UvrB-DNA preincision complex is formed. This complex is subsequently bound by UvrC and the second UvrB is released. If no lesion is found, the DNA wraps around the other UvrB subunit that will check the other stand for damage. The sequence is that of UvrABC system protein B from Parasynechococcus marenigrum (strain WH8102).